Consider the following 25-residue polypeptide: MRDKWRKKRVRRLKRKRRKMRARSK.

The disordered stretch occupies residues 1–25; the sequence is MRDKWRKKRVRRLKRKRRKMRARSK.

This sequence belongs to the eukaryotic ribosomal protein eS32 family. Component of the large ribosomal subunit (LSU). Mature yeast ribosomes consist of a small (40S) and a large (60S) subunit. The 40S small subunit contains 1 molecule of ribosomal RNA (18S rRNA) and at least 33 different proteins. The large 60S subunit contains 3 rRNA molecules (25S, 5.8S and 5S rRNA) and at least 46 different proteins.

Its subcellular location is the cytoplasm. It localises to the nucleus. Its function is as follows. Component of the ribosome, a large ribonucleoprotein complex responsible for the synthesis of proteins in the cell. The small ribosomal subunit (SSU) binds messenger RNAs (mRNAs) and translates the encoded message by selecting cognate aminoacyl-transfer RNA (tRNA) molecules. The large subunit (LSU) contains the ribosomal catalytic site termed the peptidyl transferase center (PTC), which catalyzes the formation of peptide bonds, thereby polymerizing the amino acids delivered by tRNAs into a polypeptide chain. The nascent polypeptides leave the ribosome through a tunnel in the LSU and interact with protein factors that function in enzymatic processing, targeting, and the membrane insertion of nascent chains at the exit of the ribosomal tunnel. The chain is Small ribosomal subunit protein eS32A (rpl4101) from Schizosaccharomyces pombe (strain 972 / ATCC 24843) (Fission yeast).